A 180-amino-acid polypeptide reads, in one-letter code: Capsid assembly scaffolding protein (180 aa).

It belongs to the SPP1-like scaffolding protein family. Homodimer.

Scaffolding protein involved in the icosahedric procapsid assembly. Coassembles with the capsid proteins to form the procapsid, in which the scaffolding protein is found within the external shell of icosahedrally arranged capsid protein subunits. In a subsequent step the scaffolding protein molecules are released from the procapsid. The chain is Capsid assembly scaffolding protein (g20) from Lactococcus phage mv4 (Lactococcus delbrueckii bacteriophage mv4).